We begin with the raw amino-acid sequence, 2892 residues long: MTTHQLLNKNVRTMPSWVMEANDRIGPKPPPTPPNGVAGGLPKAPALPPKAKSTPEPDYEIIEFSSQQYSNEPMKTTVIRTKTPDNKLKCTLCGSQNPWVTCAECAGQIFCASCDDMFHKHPKRKQHMRKAVEQGTPPIPPKAQAGGGAPPPVAPPRRSKRGLLTPFLGRKDQMLPPPSPTPSHKSLGGWRGSLGGGATPPVPPIATSSANQMNNRPLPDPPRSEGGGSSRSGTPKSVFDTIQRPPSVQLEKIKSKASATLDRMAILQQRYRQQKARQDLSANSEQHLSNEAGFEHWSNISPSPSHFRSGSMSSGLNSSHFDLSDDSQFHNSLLLQQRQAAGAQRRQMSTSVFNLNSNPRRPLSEAQNGGAWLANQRIQQAQSLAQLNCAGCQQSQQHPGWAQHPHQALPQHQHPDQWSQFGSQQQFNNSNLSLNVGPGYMSQQHHPHYPPPVFMTQRGMMPNVYPGAPGYPMMHPGVMGMPPSAASRAASRSRYAASPTPSRKSMSLRRKRNSYVDDELTDDEDSDQDDRRSLVSNRSGMTSASRSQHHQNHIQPRQRRLSSASQLIASDELDGDQVHHKMRNRRGSIAKSVQSEWLPERRENEGTLTRNKTATDSARTSRIYSDLESEGSGARALVQAKIQQKLQEADQHKSSKKAEPKRKPEMKDENTQAAAVVQKVVVPPAHEESASEYEEVVEEVTASESEAEAQTAPDPQEVPDEIGADDLGPPPSTPDHEWECEFCTFVNEPNIKICSICCKTPSKPPVQPNKAKKVEEKPQPPAEKSNNIKASSKTETKPVQKPTTKSQQPSQKSVAALSKTTHTNSTSSSKASPAVNSKTTSSIPIKTPSKSTLKTSSENESDNSLAKSLLHKESVENIWNTLDESIQAQAEQVLKKAQKVSTACGGTPPREIAAVEMGTSPPPQSISTQTYDALPFNTKQEEIIPVVPDRFTTPEPNKMERRPHYRSNSQLQQESERYRSANDLRYHDGFGLDPYSAGLVTKRPNFINELRMLQLQVSSPFDMPHETFGVKHEPARDPETEMHIILKELELYKFTVEELEAALKYCSPETHPIQWLRENWHKLVQTVQSLSTKYGQERGENTIGTVSQNEAREALRNSGGNVWQAVADCIQQRQQKYRKLAAKGNFLRDDIVNALTAHQGNVEQALVELNRTQLKPFLMRIWGSPNGVENESGVAIDTKSDIHDFLNTHALDCLQPPLAGQSPSPAQANPFDQPRTDESPVKSTYATPSPYQMEDSTLKNLEILIGNMEQNQAKQNQEVLRSIETMLDTFKGKPELEYETDPEIMRILTKSPISTMKPSGPAEDKSTDDVKNFVWQHIQEIVPNLVQQVEQELMEKPEEVAKIEAEQPKEPEPLLEPQPEPTPSVDPAVYIMEEVIKPNLREASIREEVQPSFIYATEIANFKLEFDRGTERWHEAEWESSDLTDAERIVYKCYMAPNEQPKEDVVDVAVESSVNSLPTAKAQEESAPEVPIEAQKIENTEVTQPETVNEELRQQEKLETPLVITSETISETVSQTANESDKQKSIENNLQIKQNVAEVQVQSDDQPSTSRDANRRAKRSQQSRKGRSREQSQKPTNRTKLPNNIDQKVNESKTAAKETEAVKDKDLSAAASNIQSDVTASDPKTSTPLKILSEGTNSNTLETMENVTSTDINDNVTIEVISNRSEEVPAIQDLGKTKDISEPTANPIEEITSIQNSTTISEQSEGPQEPEIPIEVSETTEALQVPREEASIEIVSPPNEEQTKSPTSQEVNIQDTSHIISLPITDVTPTPEIINIAPSTSSISKEQKQSPKRLSKIPVRTLSSSSLRSESRSSNRTPTANDEIEREETTSQGVPIGETVSSPKSEQLSDNQEVNLVSQETQSKKDTNIVEEPATQPLGLELEEHSPNATAVAVSPTDSDEVFEDAPEFSGSDGTRPHDETASDAELYSLDSDGQRAETKSPEDEVVILLDEESQMESSIAQSESNASLDSHSSESETSKVVLKEFVPSGDPAKQNLSELVEDTQRLIKQMRDEISMDEFESTDEDEYSDEYSDEYDEGEEEEWYDSEGEEEGDFDGEEGNTYNEHASYIEEASTGDEGTEIEDIMEEDEDLADDDEPLQSQIPLDIEPVISPALSVTPTNQETDTIAHTEVVSSTGTRLETELPNPAMESILPSQSVQEDIKVEAIPIQSAPPIADSETRPAEQPVELVLEIPSEVEPTPVEEPTALPITPAPPIVDSESRPVEPPVETVLEEPKKVTPSMKGKTANSGTASKGPSTSSSTKTNKSTVSKIPKPTNEPTNKSNSTPLNKKVPLRSKSFSAPMGISSVKRIQEVYLQKQSSSIATSRVPLKSSPVTKKSINDAISRFNSNQADGPSTSGAAAAAAAALLKPRSQPRIPKKKYHETCFSDDDYETSATEEEQEEPNLAEPQKAEQLKRKMSMPVFRAYPSVQEPVIEDPAILARKYVDQELVTNIAEAQIAATLVSMKFSEDVALWAARECSDLDQAIAMLQQECELCMNSYPMNQMVSMLKCLHKCCKQCAKSYFTVQITDRSINDCSCPFCKLPELSNEAQHEDEHLEYFSNLDIFLKSILDNDVHELFQRKLRDRSLLQDPNFKWCIQCSSGFFARPKQKRLICPDCGSVTCAQCRKPWERQHEGSSCEAYLEWKRENDPELQAQGVQEHLAQNGIDCPKCKFRYSLARGGCMHFTCTQCKFEFCYGCARPFMMGAKCTVSTYCAKLGLHAHHPRNCLFYLRDKIPLQLQFLLKEQNVKFDTEPMQIKDESSSSSKARAQARCPIPLQKETPQGLVDTVCNTEVPDKHAGMCRTHYVEYLAGKVAKAGIDPLPIFDLTDCVQELRRRGIALPERGPWDTDEIYKNMCSEVIKKHIPLKSA.

8 disordered regions span residues Asp-23–Pro-55, Lys-125–Lys-252, Ser-395–Ser-423, Pro-483–Gly-631, Gln-644–Gln-672, Ala-685–Glu-737, Cys-757–Leu-865, and Asp-949–Ser-975. Over residues Gly-40–Lys-52 the composition is skewed to low complexity. Gly residues predominate over residues Gly-189–Ala-198. Residues Ala-206–Asn-215 show a composition bias toward polar residues. Low complexity-rich tracts occupy residues Ala-402–His-412 and Pro-483–Arg-503. The segment covering Val-516 to Gln-528 has biased composition (acidic residues). Polar residues predominate over residues Val-535–Arg-546. Residues Ser-547–Arg-560 show a composition bias toward basic residues. Residues Gly-606 to Ile-623 are compositionally biased toward polar residues. A compositionally biased stretch (basic and acidic residues) spans Gln-647–Asn-670. The segment covering Lys-801 to Ser-813 has biased composition (polar residues). 2 stretches are compositionally biased toward low complexity: residues Ser-818 to Ser-837 and Lys-846 to Ser-856. Residues Met-1042 to Gly-1187 enclose the UBA-like 1 domain. Disordered stretches follow at residues Leu-1214–Gln-1252, Leu-1477–Thr-1520, Ala-1557–Ser-1653, Ser-1717–Glu-2019, Arg-2032–Thr-2082, Ser-2191–Ser-2316, and Asp-2411–Lys-2431. Positions Val-1241–Gln-1252 are enriched in polar residues. Over residues Glu-1510–Glu-1519 the composition is skewed to basic and acidic residues. Positions Gln-1560–Arg-1571 are enriched in polar residues. The span at Arg-1576 to Arg-1587 shows a compositional bias: basic residues. The span at Pro-1595–Gln-1607 shows a compositional bias: polar residues. Residues Lys-1608–Leu-1627 are compositionally biased toward basic and acidic residues. Composition is skewed to polar residues over residues Ala-1630–Ser-1653, Ser-1717–Gly-1726, and Lys-1764–Ile-1779. Positions Leu-1822–Ser-1834 are enriched in low complexity. Polar residues predominate over residues Thr-1859–Thr-1881. The segment covering Asp-1918–Pro-1927 has biased composition (acidic residues). The segment covering Asp-1953–Glu-1963 has biased composition (basic and acidic residues). Acidic residues-rich tracts occupy residues Asp-1964–Gln-1975 and Ser-2036–Glu-2079. Low complexity-rich tracts occupy residues Pro-2214 to Ile-2230 and Ser-2269 to Lys-2291. The span at Asn-2297 to Leu-2308 shows a compositional bias: polar residues. Residues Asp-2411 to Asn-2425 are compositionally biased toward acidic residues. One can recognise a UBA-like 2 domain in the interval Asp-2457–Glu-2513. The tract at residues Leu-2510–Asn-2748 is TRIAD supradomain. 14 residues coordinate Zn(2+): Cys-2514, Cys-2517, Cys-2537, Cys-2540, Cys-2618, Cys-2621, Cys-2636, Cys-2639, Cys-2644, Cys-2647, His-2655, Cys-2660, Cys-2690, and Cys-2693. An RING-type 1 zinc finger spans residues Cys-2514–Leu-2564. The necessary for linear polyubiquitination and sufficent for inducing DptA in the intestine stretch occupies residues Cys-2514–Ala-2892. Residues Gln-2601 to Cys-2660 form an IBR-type zinc finger. The RING-type 2; atypical zinc finger occupies Cys-2690–Cys-2720. Cys-2704 is an active-site residue. Positions 2709 and 2712 each coordinate Zn(2+).

Belongs to the RBR family.

It carries out the reaction [E2 ubiquitin-conjugating enzyme]-S-ubiquitinyl-L-cysteine + [acceptor protein]-L-lysine = [E2 ubiquitin-conjugating enzyme]-L-cysteine + [acceptor protein]-N(6)-ubiquitinyl-L-lysine.. In terms of biological role, E3 ubiquitin-protein ligase which conjugates linear 'Met-1'- and 'Lys-63'-linked polyubiquitin chains to substrates and plays a crucial role in the NF-kappa-B intestinal inflammatory response to oral infection and in the heat stress response. Preferentially interacts with 'Lys-63'-linked, and to a lesser extent 'Lys-48'-linked, polyubiquitin chains. Upon oral infection with a Gram-negative bacterium E.carotovora subsp. carotovora 15, functions with the E2 ubiquitin-conjugating enzyme Ubc10 to mediate the conjugation of 'Lys-63'- and linear 'Met-1'-linked polyubiquitin chains to the substrate key which is essential for activation of the NF-kappa-B signaling cascade in the adult intestinal epithelium. It is not required for systemic immune response to septic infection with either E.carotovora subsp. carotovora 15 or Gram-positive M.luteus bacteria. Function in controlling linear ubiquitination is also essential for regulating the heat stress response in adults. This function may require the E2 ubiquitin-conjugating enzymes Ubc10 or eff. The protein is E3 ubiquitin-protein ligase lubel of Drosophila melanogaster (Fruit fly).